The primary structure comprises 232 residues: DNA repair protein RecO (232 aa).

The protein belongs to the RecO family.

Involved in DNA repair and RecF pathway recombination. The protein is DNA repair protein RecO of Francisella tularensis subsp. novicida (strain U112).